Here is a 373-residue protein sequence, read N- to C-terminus: Lipoyl synthase (373 aa).

Residues 14–36 (VSNDHPSSSPLQPGVKQSGEDKI) are disordered. Positions 81, 86, 92, 107, 111, 114, and 323 each coordinate [4Fe-4S] cluster. The region spanning 93–312 (FSHGTATFMI…EEYGMALGFS (220 aa)) is the Radical SAM core domain. The disordered stretch occupies residues 346 to 373 (PAVSSTEHRERNTIASKSASKTESIHHR). The span at 358–367 (TIASKSASKT) shows a compositional bias: polar residues.

The protein belongs to the radical SAM superfamily. Lipoyl synthase family. The cofactor is [4Fe-4S] cluster.

It localises to the cytoplasm. It carries out the reaction [[Fe-S] cluster scaffold protein carrying a second [4Fe-4S](2+) cluster] + N(6)-octanoyl-L-lysyl-[protein] + 2 oxidized [2Fe-2S]-[ferredoxin] + 2 S-adenosyl-L-methionine + 4 H(+) = [[Fe-S] cluster scaffold protein] + N(6)-[(R)-dihydrolipoyl]-L-lysyl-[protein] + 4 Fe(3+) + 2 hydrogen sulfide + 2 5'-deoxyadenosine + 2 L-methionine + 2 reduced [2Fe-2S]-[ferredoxin]. Its pathway is protein modification; protein lipoylation via endogenous pathway; protein N(6)-(lipoyl)lysine from octanoyl-[acyl-carrier-protein]: step 2/2. Functionally, catalyzes the radical-mediated insertion of two sulfur atoms into the C-6 and C-8 positions of the octanoyl moiety bound to the lipoyl domains of lipoate-dependent enzymes, thereby converting the octanoylated domains into lipoylated derivatives. In Xylella fastidiosa (strain M23), this protein is Lipoyl synthase.